Here is a 99-residue protein sequence, read N- to C-terminus: Ubiquitin-related modifier 1 homolog (99 aa).

At glycine 99 the chain carries 1-thioglycine. Glycine 99 participates in a covalent cross-link: Glycyl lysine isopeptide (Gly-Lys) (interchain with K-? in acceptor proteins).

This sequence belongs to the URM1 family. As to quaternary structure, interacts with cer. In terms of processing, C-terminal thiocarboxylation occurs in 2 steps, it is first acyl-adenylated (-COAMP) via the hesA/moeB/thiF part of the MOCS3 homolog, then thiocarboxylated (-COSH) via the rhodanese domain of the MOCS3 homolog.

Its subcellular location is the cytoplasm. It participates in tRNA modification; 5-methoxycarbonylmethyl-2-thiouridine-tRNA biosynthesis. Functionally, acts as a sulfur carrier required for 2-thiolation of mcm(5)S(2)U at tRNA wobble positions of cytosolic tRNA(Lys), tRNA(Glu) and tRNA(Gln). Serves as sulfur donor in tRNA 2-thiolation reaction by being thiocarboxylated (-COSH) at its C-terminus by MOCS3. The sulfur is then transferred to tRNA to form 2-thiolation of mcm(5)S(2)U. Also acts as a ubiquitin-like protein (UBL) that is covalently conjugated via an isopeptide bond to lysine residues of target proteins such as Prx2/Jafrac1, Ciao1, Eip71CD and GILT1. The thiocarboxylated form serves as substrate for conjugation and oxidative stress specifically induces the formation of UBL-protein conjugates. The chain is Ubiquitin-related modifier 1 homolog from Drosophila persimilis (Fruit fly).